Reading from the N-terminus, the 169-residue chain is Steroid receptor-associated and regulated protein (169 aa).

In terms of assembly, interacts with 14-3-3 proteins. In terms of tissue distribution, expressed in breast tumors with a higher expression level in estrogen receptor-positive cancers.

In terms of biological role, may regulate the transcriptional function of androgen and estrogen receptors. The polypeptide is Steroid receptor-associated and regulated protein (Homo sapiens (Human)).